The primary structure comprises 860 residues: Ubiquitin fusion degradation protein 3 homolog (860 aa).

6 WD repeats span residues 27 to 65 (AHKS…YTKT), 71 to 112 (PKGI…PYAI), 115 to 154 (EHKQ…SSSF), 163 to 203 (GHTL…SVFK), 204 to 242 (GHTD…ILRK), and 244 to 283 (ATQA…DGNL). The PFU domain maps to 397 to 497 (PIHYLEEITR…DKLSKGAASA (101 aa)). The interval 494-585 (AASAQSGYED…LPQNKKKPRG (92 aa)) is disordered. Residues 586 to 856 (PLVPVPDFYI…KNIARDIVEM (271 aa)) enclose the PUL domain.

Belongs to the WD repeat PLAP family. Interacts with cdc-48.1. As to expression, expressed in intestine (at protein level).

The protein localises to the cytoplasm. In terms of biological role, plays a role in protein ubiquitination, sorting and degradation through its association with cdc-48.1 and/or cdc-48.2. In Caenorhabditis elegans, this protein is Ubiquitin fusion degradation protein 3 homolog.